Here is a 225-residue protein sequence, read N- to C-terminus: Uracil-DNA glycosylase (225 aa).

Catalysis depends on Asp-65, which acts as the Proton acceptor.

The protein belongs to the uracil-DNA glycosylase (UDG) superfamily. UNG family.

It localises to the cytoplasm. It carries out the reaction Hydrolyzes single-stranded DNA or mismatched double-stranded DNA and polynucleotides, releasing free uracil.. Its function is as follows. Excises uracil residues from the DNA which can arise as a result of misincorporation of dUMP residues by DNA polymerase or due to deamination of cytosine. The polypeptide is Uracil-DNA glycosylase (Clostridium perfringens (strain 13 / Type A)).